Reading from the N-terminus, the 388-residue chain is Formate-dependent phosphoribosylglycinamide formyltransferase (388 aa).

Residues 15–16 and E75 contribute to the N(1)-(5-phospho-beta-D-ribosyl)glycinamide site; that span reads EL. ATP-binding positions include R107, K148, 153–158, 188–191, and E196; these read SSGKGQ and EEFL. Residues 112-302 form the ATP-grasp domain; that stretch reads DLASAELALL…EFELHLRAVL (191 aa). Positions 261 and 273 each coordinate Mg(2+). Residues D280, K350, and 357–358 contribute to the N(1)-(5-phospho-beta-D-ribosyl)glycinamide site; that span reads RR.

This sequence belongs to the PurK/PurT family. In terms of assembly, homodimer.

It catalyses the reaction N(1)-(5-phospho-beta-D-ribosyl)glycinamide + formate + ATP = N(2)-formyl-N(1)-(5-phospho-beta-D-ribosyl)glycinamide + ADP + phosphate + H(+). It functions in the pathway purine metabolism; IMP biosynthesis via de novo pathway; N(2)-formyl-N(1)-(5-phospho-D-ribosyl)glycinamide from N(1)-(5-phospho-D-ribosyl)glycinamide (formate route): step 1/1. Functionally, involved in the de novo purine biosynthesis. Catalyzes the transfer of formate to 5-phospho-ribosyl-glycinamide (GAR), producing 5-phospho-ribosyl-N-formylglycinamide (FGAR). Formate is provided by PurU via hydrolysis of 10-formyl-tetrahydrofolate. The chain is Formate-dependent phosphoribosylglycinamide formyltransferase from Prochlorococcus marinus (strain MIT 9313).